Here is a 274-residue protein sequence, read N- to C-terminus: Diaminopimelate epimerase (274 aa).

Substrate is bound by residues Asn11, Gln44, and Asn64. Residue Cys73 is the Proton donor of the active site. Substrate-binding positions include 74-75 (GN), Asn157, Asn190, and 208-209 (ER). Cys217 (proton acceptor) is an active-site residue. Position 218–219 (218–219 (GS)) interacts with substrate.

This sequence belongs to the diaminopimelate epimerase family. In terms of assembly, homodimer.

The protein localises to the cytoplasm. The enzyme catalyses (2S,6S)-2,6-diaminopimelate = meso-2,6-diaminopimelate. Its pathway is amino-acid biosynthesis; L-lysine biosynthesis via DAP pathway; DL-2,6-diaminopimelate from LL-2,6-diaminopimelate: step 1/1. In terms of biological role, catalyzes the stereoinversion of LL-2,6-diaminopimelate (L,L-DAP) to meso-diaminopimelate (meso-DAP), a precursor of L-lysine and an essential component of the bacterial peptidoglycan. The chain is Diaminopimelate epimerase from Actinobacillus pleuropneumoniae serotype 3 (strain JL03).